The following is a 564-amino-acid chain: Phenylalanine--tRNA ligase beta subunit (564 aa).

The region spanning 286–362 (YFQNSLKINV…IGKGLDNFKS (77 aa)) is the B5 domain. Positions 340, 346, 349, and 350 each coordinate Mg(2+).

The protein belongs to the phenylalanyl-tRNA synthetase beta subunit family. Type 2 subfamily. Tetramer of two alpha and two beta subunits. Mg(2+) serves as cofactor.

It localises to the cytoplasm. It catalyses the reaction tRNA(Phe) + L-phenylalanine + ATP = L-phenylalanyl-tRNA(Phe) + AMP + diphosphate + H(+). This chain is Phenylalanine--tRNA ligase beta subunit, found in Borrelia duttonii (strain Ly).